We begin with the raw amino-acid sequence, 82 residues long: ATP synthase subunit c (82 aa).

2 helical membrane-spanning segments follow: residues Met-5–Ile-25 and Phe-55–Phe-75.

This sequence belongs to the ATPase C chain family. In terms of assembly, F-type ATPases have 2 components, F(1) - the catalytic core - and F(0) - the membrane proton channel. F(1) has five subunits: alpha(3), beta(3), gamma(1), delta(1), epsilon(1). F(0) has three main subunits: a(1), b(2) and c(10-14). The alpha and beta chains form an alternating ring which encloses part of the gamma chain. F(1) is attached to F(0) by a central stalk formed by the gamma and epsilon chains, while a peripheral stalk is formed by the delta and b chains.

Its subcellular location is the cell membrane. Functionally, f(1)F(0) ATP synthase produces ATP from ADP in the presence of a proton or sodium gradient. F-type ATPases consist of two structural domains, F(1) containing the extramembraneous catalytic core and F(0) containing the membrane proton channel, linked together by a central stalk and a peripheral stalk. During catalysis, ATP synthesis in the catalytic domain of F(1) is coupled via a rotary mechanism of the central stalk subunits to proton translocation. In terms of biological role, key component of the F(0) channel; it plays a direct role in translocation across the membrane. A homomeric c-ring of between 10-14 subunits forms the central stalk rotor element with the F(1) delta and epsilon subunits. This is ATP synthase subunit c from Carboxydothermus hydrogenoformans (strain ATCC BAA-161 / DSM 6008 / Z-2901).